The following is a 135-amino-acid chain: MTMTDPIADMLTRLRNANQAYHDAVSMPYSKLKQGVADILKQEGYITSYDVTEPAEGEVGKTLTITLKYGRNRERSIAGVRRISKPGLRVYAKHTGLPKVLGGLGVAIISTSQGLLTDRQANQKGVGGEVLAYVW.

This sequence belongs to the universal ribosomal protein uS8 family. Part of the 30S ribosomal subunit. Contacts proteins S5 and S12.

Functionally, one of the primary rRNA binding proteins, it binds directly to 16S rRNA central domain where it helps coordinate assembly of the platform of the 30S subunit. This is Small ribosomal subunit protein uS8 from Nocardioides sp. (strain ATCC BAA-499 / JS614).